Reading from the N-terminus, the 109-residue chain is Keratin, type II microfibrillar (109 aa).

The linker 1 stretch occupies residues 1–10 (QNRQCCESNL). The IF rod domain maps to 1–109 (QNRQCCESNL…RLYEEEIRVL (109 aa)). The interval 11–109 (EPLFSGYIET…RLYEEEIRVL (99 aa)) is coil 1B.

The protein belongs to the intermediate filament family.

Wool microfibrillar keratin. In Ovis aries (Sheep), this protein is Keratin, type II microfibrillar.